Here is a 261-residue protein sequence, read N- to C-terminus: Phosphoribosylaminoimidazole-succinocarboxamide synthase (261 aa).

It belongs to the SAICAR synthetase family.

The enzyme catalyses 5-amino-1-(5-phospho-D-ribosyl)imidazole-4-carboxylate + L-aspartate + ATP = (2S)-2-[5-amino-1-(5-phospho-beta-D-ribosyl)imidazole-4-carboxamido]succinate + ADP + phosphate + 2 H(+). It functions in the pathway purine metabolism; IMP biosynthesis via de novo pathway; 5-amino-1-(5-phospho-D-ribosyl)imidazole-4-carboxamide from 5-amino-1-(5-phospho-D-ribosyl)imidazole-4-carboxylate: step 1/2. The chain is Phosphoribosylaminoimidazole-succinocarboxamide synthase from Novosphingobium aromaticivorans (strain ATCC 700278 / DSM 12444 / CCUG 56034 / CIP 105152 / NBRC 16084 / F199).